Here is a 255-residue protein sequence, read N- to C-terminus: Indole-3-glycerol phosphate synthase (255 aa).

Belongs to the TrpC family.

The catalysed reaction is 1-(2-carboxyphenylamino)-1-deoxy-D-ribulose 5-phosphate + H(+) = (1S,2R)-1-C-(indol-3-yl)glycerol 3-phosphate + CO2 + H2O. It functions in the pathway amino-acid biosynthesis; L-tryptophan biosynthesis; L-tryptophan from chorismate: step 4/5. The sequence is that of Indole-3-glycerol phosphate synthase from Streptococcus thermophilus (strain CNRZ 1066).